The following is a 158-amino-acid chain: 14-3-3 protein gamma (158 aa).

Residues 1-158 (AAAMKNVTEL…TSDQQDDDGG (158 aa)) are interaction with SPATA18/MIEAP. The residue at position 48 (serine 48) is a Phosphoserine. At tyrosine 60 the chain carries Phosphotyrosine. Position 72 is a phosphothreonine (threonine 72). A Phosphoserine modification is found at serine 130. Threonine 149 carries the phosphothreonine modification. A Phosphoserine modification is found at serine 150.

Belongs to the 14-3-3 family. Homodimer. Part of a complex that contains DSG3, PKP1, YAP1 and YWHAG; the complex is required for localization of DSG3 and YAP1 to the cell membrane in keratinocytes. Interacts with SAMSN1. Interacts with RAF1, SSH1 and CRTC2/TORC2. Interacts with ABL1 (phosphorylated form); the interaction retains it in the cytoplasm. Interacts with GAB2. Interacts with MDM4 (phosphorylated); negatively regulates MDM4 activity toward TP53. Interacts with PKA-phosphorylated AANAT and SIRT2. Interacts with the 'Thr-369' phosphorylated form of DAPK2. Interacts with PI4KB, TBC1D22A and TBC1D22B. Interacts with SLITRK1. Interacts with LRRK2; this interaction is dependent on LRRK2 phosphorylation. Interacts with MARK2 and MARK3. Interacts with MEFV. Interacts with ENDOG, TSC2 and PIK3C3; interaction with ENDOG weakens its interaction with TSC2 and PIK3C3. Interacts with (phosphorylated) WDR24. Interacts with BEST1; this interaction promotes L-glutamate channel activity leading to the positive regulation of NMDA glutamate receptor activity through the L-glutamate secretion. Interacts with PKP1 (when phosphorylated); the interaction results in translocation of PKP1 to the cytoplasm and loss of intercellular adhesion in keratinocytes. Interacts with SPATA18/MIEAP; a protein that also plays a role in MALM. Post-translationally, phosphorylated by various PKC isozymes.

The protein resides in the cytoplasm. It localises to the cytosol. The protein localises to the mitochondrion matrix. Its function is as follows. Adapter protein implicated in the regulation of a large spectrum of both general and specialized signaling pathways. Binds to a large number of partners, usually by recognition of a phosphoserine or phosphothreonine motif. Binding generally results in the modulation of the activity of the binding partner. Promotes inactivation of WDR24 component of the GATOR2 complex by binding to phosphorylated WDR24. Participates in the positive regulation of NMDA glutamate receptor activity by promoting the L-glutamate secretion through interaction with BEST1. Reduces keratinocyte intercellular adhesion, via interacting with PKP1 and sequestering it in the cytoplasm, thereby reducing its incorporation into desmosomes. Plays a role in mitochondrial protein catabolic process (also named MALM) that promotes the degradation of damaged proteins inside mitochondria. This Ovis aries (Sheep) protein is 14-3-3 protein gamma.